A 187-amino-acid chain; its full sequence is Ribosome-recycling factor (187 aa).

This sequence belongs to the RRF family.

The protein localises to the cytoplasm. In terms of biological role, responsible for the release of ribosomes from messenger RNA at the termination of protein biosynthesis. May increase the efficiency of translation by recycling ribosomes from one round of translation to another. This chain is Ribosome-recycling factor, found in Bradyrhizobium sp. (strain BTAi1 / ATCC BAA-1182).